The primary structure comprises 599 residues: MKRCQSSRPTAAVAAVVAAVSMIIVLVSGTAIPSAAAAAAVEHTFVVSQVNMTHLCKEMAFTVVNGQLPGPTIEVTEGDSVTVHVVNKSPYNLTIHWHGVYQLLNCWNDGVPMITQRPIQPNHNFTYRFNVAGQEGTLWWHAHDAFLRGTVHGALIIRPRHGAASYPFPRPHREVPIIIGEWWEKDLPQVDRNMTNGYFDDYSSGSTINGKLGDLFNCSGVLEDGYVLDVEPGKTYLLRIINAALFSEYFLKIAGHRFTVVASDANYLTPYSTDVVVIAPGETLDAIVVADAPPSGRYYIAAQPIQAPPPDTQTPEYATRGTLQYSSNSRNSSAAAMPEMPHQHDTMRSFYFRGNLTAGARLHRHGRRRVPARADESLFVTLGLGSVCRHGGASCKRGGNLKESIVVANVNNVSFHIPAAAATPILEAHYYHRLHAGAGEEEEELAERPPRAYNYTDQALTPFGPEEMRLEATSRAVVTRRFRHGATVDVVFQSTAMLQGDSNPMHLHGHDVFLLAQGIGIYDAARDEGKFNLVNPPRKNTVLVPNLGWAAVRFVADNPGAWLMHCHFEFHLSMGMAAVFIVEDGPTVDTSLPPPPEDF.

The first 29 residues, 1 to 29, serve as a signal peptide directing secretion; that stretch reads MKRCQSSRPTAAVAAVVAAVSMIIVLVSG. 2 consecutive Plastocyanin-like domains span residues 46 to 162 and 173 to 328; these read VVSQ…PRHG and REVP…YSSN. Asparagine 51 and asparagine 92 each carry an N-linked (GlcNAc...) asparagine glycan. Histidine 96 and histidine 98 together coordinate Cu cation. Asparagine 124 is a glycosylation site (N-linked (GlcNAc...) asparagine). Cu cation is bound by residues histidine 141 and histidine 143. N-linked (GlcNAc...) asparagine glycans are attached at residues asparagine 193, asparagine 217, asparagine 331, asparagine 355, asparagine 412, and asparagine 454. Positions 444–586 constitute a Plastocyanin-like 3 domain; that stretch reads ELAERPPRAY…AAVFIVEDGP (143 aa). Asparagine 503, histidine 506, histidine 508, histidine 565, cysteine 566, histidine 567, histidine 571, and methionine 576 together coordinate Cu cation.

This sequence belongs to the multicopper oxidase family. Requires Cu cation as cofactor.

The protein resides in the secreted. Its subcellular location is the extracellular space. The protein localises to the apoplast. The enzyme catalyses 4 hydroquinone + O2 = 4 benzosemiquinone + 2 H2O. Functionally, lignin degradation and detoxification of lignin-derived products. The chain is Laccase-15 (LAC15) from Oryza sativa subsp. japonica (Rice).